The following is a 445-amino-acid chain: Chromosomal replication initiator protein DnaA (445 aa).

Positions 1 to 73 (MSPNSTLWQT…NELATKYSST (73 aa)) are domain I, interacts with DnaA modulators. The segment at 73–102 (TPVRLKFVSQEEVIEEPVADRKLTIDYRQG) is domain II. Positions 103 to 323 (NLNSTYTFDS…GALIRLISYA (221 aa)) are domain III, AAA+ region. ATP is bound by residues Gly-147, Gly-149, Lys-150, and Thr-151. Positions 324-445 (QTFNLEITMN…KFAVDSIVKK (122 aa)) are domain IV, binds dsDNA.

This sequence belongs to the DnaA family. As to quaternary structure, oligomerizes as a right-handed, spiral filament on DNA at oriC.

It localises to the cytoplasm. Plays an essential role in the initiation and regulation of chromosomal replication. ATP-DnaA binds to the origin of replication (oriC) to initiate formation of the DNA replication initiation complex once per cell cycle. Binds the DnaA box (a 9 base pair repeat at the origin) and separates the double-stranded (ds)DNA. Forms a right-handed helical filament on oriC DNA; dsDNA binds to the exterior of the filament while single-stranded (ss)DNA is stabiized in the filament's interior. The ATP-DnaA-oriC complex binds and stabilizes one strand of the AT-rich DNA unwinding element (DUE), permitting loading of DNA polymerase. After initiation quickly degrades to an ADP-DnaA complex that is not apt for DNA replication. Binds acidic phospholipids. This is Chromosomal replication initiator protein DnaA from Acholeplasma laidlawii.